Consider the following 116-residue polypeptide: Methionine-R-sulfoxide reductase B1 (116 aa).

The region spanning 1-106 is the MsrB domain; it reads MSFCSFFGGE…FSSSLKFIPK (106 aa). Zn(2+) is bound by residues C23, C26, C71, and C74. Catalysis depends on U95, which acts as the Nucleophile. A non-standard amino acid (selenocysteine) is located at residue U95.

This sequence belongs to the MsrB Met sulfoxide reductase family. It depends on Zn(2+) as a cofactor. Post-translationally, truncated MSRB1/SEPX1 proteins produced by failed UGA/Sec decoding are ubiquitinated by the CRL2(FEM1C) E3 ubiquitin-protein ligase complex.

The protein resides in the cytoplasm. Its subcellular location is the nucleus. It localises to the cytoskeleton. It catalyses the reaction L-methionyl-[protein] + [thioredoxin]-disulfide + H2O = L-methionyl-(R)-S-oxide-[protein] + [thioredoxin]-dithiol. The enzyme catalyses [thioredoxin]-disulfide + L-methionine + H2O = L-methionine (R)-S-oxide + [thioredoxin]-dithiol. Methionine-sulfoxide reductase that specifically reduces methionine (R)-sulfoxide back to methionine. While in many cases, methionine oxidation is the result of random oxidation following oxidative stress, methionine oxidation is also a post-translational modification that takes place on specific residue. Acts as a regulator of actin assembly by reducing methionine (R)-sulfoxide mediated by MICALs (MICAL1, MICAL2 or MICAL3) on actin, thereby promoting filament repolymerization. Plays a role in innate immunity by reducing oxidized actin, leading to actin repolymerization in macrophages. In Rattus norvegicus (Rat), this protein is Methionine-R-sulfoxide reductase B1 (Msrb1).